Here is a 505-residue protein sequence, read N- to C-terminus: Glycerol kinase (505 aa).

Thr14 lines the ADP pocket. Thr14, Thr15, and Ser16 together coordinate ATP. Thr14 is a binding site for sn-glycerol 3-phosphate. Residue Arg18 coordinates ADP. Residues Arg84, Glu85, Tyr136, and Asp246 each coordinate sn-glycerol 3-phosphate. Glycerol contacts are provided by Arg84, Glu85, Tyr136, Asp246, and Gln247. Residues Thr268 and Gly311 each contribute to the ADP site. ATP is bound by residues Thr268, Gly311, Gln315, and Gly412. ADP contacts are provided by Gly412 and Asn416.

The protein belongs to the FGGY kinase family.

It carries out the reaction glycerol + ATP = sn-glycerol 3-phosphate + ADP + H(+). Its pathway is polyol metabolism; glycerol degradation via glycerol kinase pathway; sn-glycerol 3-phosphate from glycerol: step 1/1. Inhibited by fructose 1,6-bisphosphate (FBP). In terms of biological role, key enzyme in the regulation of glycerol uptake and metabolism. Catalyzes the phosphorylation of glycerol to yield sn-glycerol 3-phosphate. This is Glycerol kinase from Vibrio parahaemolyticus serotype O3:K6 (strain RIMD 2210633).